The following is a 377-amino-acid chain: Protein-tyrosine sulfotransferase 2 (377 aa).

The Cytoplasmic segment spans residues 1–8 (MRLSMRRA). Residues 9–25 (LLAAGLALALVLAVHLG) traverse the membrane as a helical; Signal-anchor for type II membrane protein segment. Residues 26–377 (QRVLECQAVL…NSTSSHLGSS (352 aa)) lie on the Lumenal side of the membrane. Residue 78–82 (RSGTT) participates in 3'-phosphoadenylyl sulfate binding. Cysteines 96 and 156 form a disulfide. Catalysis depends on glutamate 99, which acts as the Proton donor/acceptor. Residues 101–105 (RIIPR) are interaction with peptide substrate. 3'-phosphoadenylyl sulfate contacts are provided by arginine 183, serine 191, and arginine 195. Cysteine 225 and cysteine 233 are oxidised to a cystine. Residues tyrosine 238, 285 to 294 (STDQVIKPVN), and lysine 300 contribute to the 3'-phosphoadenylyl sulfate site. 2 N-linked (GlcNAc...) asparagine glycosylation sites follow: asparagine 343 and asparagine 368.

Belongs to the protein sulfotransferase family. In terms of assembly, homodimer. Can also form heterodimers with TPST1. Post-translationally, N-glycosylated.

The protein localises to the golgi apparatus membrane. The catalysed reaction is L-tyrosyl-[protein] + 3'-phosphoadenylyl sulfate = O-sulfo-L-tyrosine-[protein] + adenosine 3',5'-bisphosphate + H(+). In terms of biological role, catalyzes the O-sulfation of tyrosine residues within acidic motifs of polypeptides, using 3'-phosphoadenylyl sulfate (PAPS) as cosubstrate. In Bos taurus (Bovine), this protein is Protein-tyrosine sulfotransferase 2 (TPST2).